A 473-amino-acid chain; its full sequence is GTPase Der (473 aa).

EngA-type G domains follow at residues 3–166 (PVIA…ENPE) and 177–350 (IRIG…ESAM). Residues 9–16 (GRPNVGKS), 56–60 (DTGGL), 118–121 (NKTD), 183–190 (GRPNVGKS), 230–234 (DTAGV), and 295–298 (NKWD) each bind GTP. The 85-residue stretch at 351 to 435 (SKWPTNRLTA…PIRFEFKSGE (85 aa)) folds into the KH-like domain. The span at 444 to 458 (RLTPRQKVKKDNDLK) shows a compositional bias: basic and acidic residues. The segment at 444-473 (RLTPRQKVKKDNDLKKGRRIKKTRQKSVKR) is disordered. Residues 459–473 (KGRRIKKTRQKSVKR) show a composition bias toward basic residues.

This sequence belongs to the TRAFAC class TrmE-Era-EngA-EngB-Septin-like GTPase superfamily. EngA (Der) GTPase family. In terms of assembly, associates with the 50S ribosomal subunit.

GTPase that plays an essential role in the late steps of ribosome biogenesis. This chain is GTPase Der, found in Marinobacter nauticus (strain ATCC 700491 / DSM 11845 / VT8) (Marinobacter aquaeolei).